Here is a 147-residue protein sequence, read N- to C-terminus: Proteinase inhibitor type-2 (147 aa).

Residues 1–25 (MAVHKEVSFVAYLLIVLGMFLYVDA) form the signal peptide. 2 tandem repeats follow at residues 25–81 (ALGC…DPKN) and 82–141 (PKAC…DEPK). Disulfide bonds link Cys28–Cys116, Cys32–Cys112, Cys40–Cys122, Cys52–Cys89, Cys55–Cys73, Cys56–Cys85, Cys62–Cys98, and Cys115–Cys133.

Belongs to the protease inhibitor I20 (potato type II proteinase inhibitor) family.

The protein is Proteinase inhibitor type-2 of Solanum tuberosum (Potato).